A 1165-amino-acid polypeptide reads, in one-letter code: MWRVKTLNLGLSPSPQKGKPAMSTPLRELKLQPEALADSGKGPSMISALTPYLCRLELKERCNNSSPVDFINTENNFLSEQFSHPSTHIEACQRESDPTPESNSLFHTLEEAIETVDDFVVDPRDDSIVESMVLLPFSLGQQQDLMLQAHLDTTAERTKSSLNESLGLEDLVGKEVAPCVEDSLTEIVAIRPEQPTFQDPPLGPSDTEDAPVDLVPSENVLNFSLARLSPSAVLAQDFSVDHVDPGEETVENRVLQEMETSFPTFPEEAELGDQAPAANAEAVSPLYLTSSLVEMGPREAPGPTVEDASRIPGLESETWMSPLAWLEKGVNTSVMLQNLRQSLSFSSVLQDAAVGNTPLATCSVGTSFTPPAPLEVGTKDSTSETERLLLGCRPPDLATLSRHDLEENLLNSLVLLEVLSHQLQAWKSQLTVPHREARDSSTQTDSSPCGVTKTPKHLQDSKEIRQALLQARNVMQSWGLVSGDLLSLLHLSLTHVQEGRVTVSQESQRSKTLVSSCSRVLKKLKAKLQSLKTECEEARHSKEMALKGKAAAEAVLEAFRAHASQRISQLEQGLTSMQEFRGLLQEAQTQLIGLHTEQKELAQQTVSLSSALQQDWTSVQLNYGIWAALLSWSRELTKKLTAKSRQALQERDAAIEEKKQVVKEVEQVSAHLEDCKGQIEQLKLENSRLTADLSAQLQILTSTESQLKEVRSQHSRCVQDLAVKDELLCQLTQSNKEQATQWQKEEMELKHIQAELLQQQAVLAKEVQDLRETVEFIDEESQVAHRELGQIESQLKVTLELLRERSLQCETLRDTVDSLRAELASTEAKHEKQALEKTHQHSQELRLLAEQLQSLTLFLQAKLKENKAESEIILPSTGSAPAQEHPLSNDSSISEQTPTAAVDEVPEPAPVPLLGSVKSAFTRVASMASFQPTETPDLEKSLAEMSTVLQELKSLCSLLQESKEEATGVLQREICELHSRLQAQEEEHQEALKAKEADMEKLNQALCLLRKNEKELLEVIQKQNEKILGQIDKSGQLINLREEVTQLTQSLRRAETETKVLQEALEGQLDPSCQLMATNWIQEKVFLSQEVSKLRVMFLEMKTEKEQLMDKYLSHRHILEENLRRSDTELKKLDDTIQHVYETLLSIPETMKSCKELQGLLEFLS.

Positions Met1–Ser23 are disordered. Ser12, Ser14, Ser66, Ser161, Ser321, Ser333, and Ser342 each carry phosphoserine. The interval Thr431–His457 is disordered. Positions Ser440–Cys449 are enriched in polar residues. Residues Lys453 to Ala821 form an interaction with KNSTRN region. The stretch at Arg509–Thr856 forms a coiled coil. The disordered stretch occupies residues Pro875 to Glu907. Positions Ser876 to Thr897 are enriched in polar residues. Residues Asp937–Ser1146 adopt a coiled-coil conformation. Ser946 is modified (phosphoserine; by GSK3-beta).

As to quaternary structure, homodimer, with a globular head domain and a long stalk. Homooligomer; the globular head domains associate, resulting in aster-like structures. Binds to microtubules in the mitotic spindle. Interacts with DCLRE1B/Apollo. Part of an astrin (SPAG5)-kinastrin (SKAP) complex containing KNSTRN, SPAG5, PLK1, DYNLL1 and SGO2A. Interacts with KNSTRN. Interacts with RPTOR; this interaction competes with RPTOR binding to MTOR, resulting in decreased mTORC1 formation. Interacts with G3BP1. The complex formed with G3BP1 and RPTOR is increased by oxidative stress. Interacts with OSBPL8, PCM1 and CDK5RAP2. Interacts (via C-terminus) with NUMA1 (via C-terminus); this interaction promotes the recruitment of SPAG5 to the microtubules at spindle poles in a dynein-dynactin-dependent manner. Interacts with DYNLL1. Phosphorylated by AURKA. In terms of tissue distribution, detected in testis, but not in the other tissues tested.

The protein localises to the cytoplasm. It localises to the cytoskeleton. The protein resides in the spindle. Its subcellular location is the spindle pole. It is found in the chromosome. The protein localises to the centromere. It localises to the kinetochore. The protein resides in the midbody. Its subcellular location is the microtubule organizing center. It is found in the centrosome. The protein localises to the centriolar satellite. Its function is as follows. Essential component of the mitotic spindle required for normal chromosome segregation and progression into anaphase. Required for chromosome alignment, normal timing of sister chromatid segregation, and maintenance of spindle pole architecture. In complex with SKAP, promotes stable microtubule-kinetochore attachments. May contribute to the regulation of separase activity. May regulate AURKA localization to mitotic spindle, but not to centrosomes and CCNB1 localization to both mitotic spindle and centrosomes. Involved in centriole duplication. Required for CDK5RAP22, CEP152, WDR62 and CEP63 centrosomal localization and promotes the centrosomal localization of CDK2. In non-mitotic cells, upon stress induction, inhibits mammalian target of rapamycin complex 1 (mTORC1) association and recruits the mTORC1 component RPTOR to stress granules (SGs), thereby preventing mTORC1 hyperactivation-induced apoptosis. May enhance GSK3B-mediated phosphorylation of other substrates, such as MAPT/TAU. This Mus musculus (Mouse) protein is Sperm-associated antigen 5 (Spag5).